The following is a 113-amino-acid chain: U11-theraphotoxin-Hhn1a (113 aa).

The first 21 residues, 1 to 21 (MNTVRVTFLLVFVLAVSLGQA), serve as a signal peptide directing secretion. Positions 22–74 (DKDENRMEVQEKTEQGKSYLDFAENLLLQKLEELEAKLLEEDSEESRNSRQKR) are excised as a propeptide. The disordered stretch occupies residues 61 to 83 (EEDSEESRNSRQKRCIGEGVPCD). Intrachain disulfides connect cysteine 75-cysteine 90, cysteine 82-cysteine 95, and cysteine 89-cysteine 110.

This sequence belongs to the neurotoxin 14 (magi-1) family. 01 (HNTX-16) subfamily. Expressed by the venom gland.

The protein localises to the secreted. Functionally, probable ion channel inhibitor. The protein is U11-theraphotoxin-Hhn1a of Cyriopagopus hainanus (Chinese bird spider).